We begin with the raw amino-acid sequence, 521 residues long: Chromaffin granule amine transporter (521 aa).

At 1-21 the chain is on the cytoplasmic side; that stretch reads MLQVVLGAPQRLLKEGRQSRK. A helical membrane pass occupies residues 22-42; the sequence is LVLVVVFVALLLDNMLLTVVV. Residues 43-135 lie on the Lumenal, vesicle side of the membrane; it reads PIVPTFLYAT…IEFLEEENVR (93 aa). N-linked (GlcNAc...) asparagine glycosylation is found at asparagine 58, asparagine 87, and asparagine 104. A helical membrane pass occupies residues 136 to 155; the sequence is IGILFASKALMQLLVNPFVG. Topologically, residues 156 to 164 are cytoplasmic; it reads PLTNRIGYH. The chain crosses the membrane as a helical span at residues 165 to 185; the sequence is IPMFVGFMIMFLSTLMFAFSG. Over 186–194 the chain is Lumenal, vesicle; the sequence is TYALLFVAR. The helical transmembrane segment at 195–215 threads the bilayer; sequence TLQGIGSSFSSVAGLGMLASV. The Cytoplasmic segment spans residues 216-224; it reads YTDNYERGR. The helical transmembrane segment at 225-247 threads the bilayer; that stretch reads AMGIALGGLALGLLVGAPFGSVM. Over 248-253 the chain is Lumenal, vesicle; sequence YEFVGK. Residues 254–276 form a helical membrane-spanning segment; sequence SSPFLILAFLALLDGALQLCILW. Over 277-296 the chain is Cytoplasmic; sequence PSKVSPESAMGTSLLTLLKD. The chain crosses the membrane as a helical span at residues 297–316; the sequence is PYILVAAGSICLANMGVAIL. The Lumenal, vesicle portion of the chain corresponds to 317–332; the sequence is EPTLPIWMMQTMCSPE. The chain crosses the membrane as a helical span at residues 333 to 357; it reads WQLGLAFLPASVAYLIGTNLFGVLA. The Cytoplasmic portion of the chain corresponds to 358–362; sequence NKMGR. A helical transmembrane segment spans residues 363–383; the sequence is WLCSLVGMVAVGISLLCVPLA. The Lumenal, vesicle portion of the chain corresponds to 384–394; it reads HNIFGLIGPNA. Residues 395–415 form a helical membrane-spanning segment; the sequence is GLGFAIGMVDSSLMPIMGYLV. Topologically, residues 416 to 419 are cytoplasmic; that stretch reads DLRH. A helical membrane pass occupies residues 420–440; the sequence is TSVYGSVYAIADVAFCVGFAI. Over 441–445 the chain is Lumenal, vesicle; that stretch reads GPSTG. A helical membrane pass occupies residues 446–467; that stretch reads GVIVQVIGFPWLMVIIGTINII. Topologically, residues 468 to 521 are cytoplasmic; the sequence is YAPLCCFLQNPPAKEEKRAILSQECPTETQMYTFQKPTKAFPLGENSDDPSSGE.

This sequence belongs to the major facilitator superfamily. Vesicular transporter family. In terms of tissue distribution, adrenal gland.

It localises to the cytoplasmic vesicle. Its subcellular location is the secretory vesicle membrane. It is found in the secretory vesicle. The protein resides in the synaptic vesicle membrane. It carries out the reaction serotonin(in) + 2 H(+)(out) = serotonin(out) + 2 H(+)(in). It catalyses the reaction (R)-noradrenaline(in) + 2 H(+)(out) = (R)-noradrenaline(out) + 2 H(+)(in). The enzyme catalyses dopamine(in) + 2 H(+)(out) = dopamine(out) + 2 H(+)(in). Strongly inhibited by reserpine, ketanserin and methamphetamine. Also inhibited weakly by tetrabenazine. In terms of biological role, electrogenic antiporter that exchanges one cationic monoamine with two intravesicular protons across the membrane of secretory and synaptic vesicles. Uses the electrochemical proton gradient established by the V-type proton-pump ATPase to accumulate high concentrations of monoamines inside the vesicles prior to their release via exocytosis. Transports catecholamines and indolamines with higher affinity for serotonin. Regulates the transvesicular monoaminergic gradient that determines the quantal size. Mediates presynaptic monoaminergic vesicle transport in the amygdala and prefrontal brain regions related with emotion processing in response to environmental stimuli. This Rattus norvegicus (Rat) protein is Chromaffin granule amine transporter (Slc18a1).